The primary structure comprises 165 residues: Ribosome maturation factor RimM (165 aa).

The PRC barrel domain maps to E94 to A165.

Belongs to the RimM family. As to quaternary structure, binds ribosomal protein uS19.

It is found in the cytoplasm. In terms of biological role, an accessory protein needed during the final step in the assembly of 30S ribosomal subunit, possibly for assembly of the head region. Essential for efficient processing of 16S rRNA. May be needed both before and after RbfA during the maturation of 16S rRNA. It has affinity for free ribosomal 30S subunits but not for 70S ribosomes. In Rickettsia rickettsii (strain Sheila Smith), this protein is Ribosome maturation factor RimM.